Here is a 446-residue protein sequence, read N- to C-terminus: N-succinylarginine dihydrolase (446 aa).

Residues 19–28 (AGLSFGNVAS), Asn-110, and 137–138 (HR) contribute to the substrate site. Glu-174 is a catalytic residue. Position 213 (Arg-213) interacts with substrate. His-249 is an active-site residue. Positions 251 and 364 each coordinate substrate. Catalysis depends on Cys-370, which acts as the Nucleophile.

This sequence belongs to the succinylarginine dihydrolase family. As to quaternary structure, homodimer.

The catalysed reaction is N(2)-succinyl-L-arginine + 2 H2O + 2 H(+) = N(2)-succinyl-L-ornithine + 2 NH4(+) + CO2. Its pathway is amino-acid degradation; L-arginine degradation via AST pathway; L-glutamate and succinate from L-arginine: step 2/5. Its function is as follows. Catalyzes the hydrolysis of N(2)-succinylarginine into N(2)-succinylornithine, ammonia and CO(2). This is N-succinylarginine dihydrolase from Paraburkholderia xenovorans (strain LB400).